The chain runs to 458 residues: Putative long chain fatty acid-CoA ligase VraA (458 aa).

The protein belongs to the ATP-dependent AMP-binding enzyme family.

In Staphylococcus aureus (strain Mu3 / ATCC 700698), this protein is Putative long chain fatty acid-CoA ligase VraA (vraA).